Reading from the N-terminus, the 307-residue chain is GTPase Era (307 aa).

Residues 13–180 form the Era-type G domain; the sequence is RCGFVALIGA…RRALAEMVPP (168 aa). The interval 21–28 is G1; that stretch reads GAPNVGKS. 21–28 is a binding site for GTP; that stretch reads GAPNVGKS. The interval 47–51 is G2; it reads QTTRA. A G3 region spans residues 68-71; that stretch reads DTPG. Residues 68-72 and 130-133 contribute to the GTP site; these read DTPGI and NKVD. The tract at residues 130-133 is G4; the sequence is NKVD. The tract at residues 159-161 is G5; it reads ISA. One can recognise a KH type-2 domain in the interval 211–288; sequence LHQELPYQST…HLFLFVKVRE (78 aa).

The protein belongs to the TRAFAC class TrmE-Era-EngA-EngB-Septin-like GTPase superfamily. Era GTPase family. Monomer.

Its subcellular location is the cytoplasm. The protein localises to the cell inner membrane. Functionally, an essential GTPase that binds both GDP and GTP, with rapid nucleotide exchange. Plays a role in 16S rRNA processing and 30S ribosomal subunit biogenesis and possibly also in cell cycle regulation and energy metabolism. The polypeptide is GTPase Era (Bradyrhizobium sp. (strain ORS 278)).